Consider the following 235-residue polypeptide: Voltage-gated hydrogen channel 1 (235 aa).

Over 1–62 (MSRYLKHFTV…VMKKLFSSRR (62 aa)) the chain is Cytoplasmic. The helical transmembrane segment at 63–83 (FQIVIVFLVIVDALLVLGELL) threads the bilayer. Residues 84–100 (MDLKIIHPDKYHIAPKV) are Extracellular-facing. A helical transmembrane segment spans residues 101 to 123 (FHYLSLSILTIFLVEVGFKIFVY). Over 124 to 131 (GREFFHHK) the chain is Cytoplasmic. A helical membrane pass occupies residues 132–152 (FEVLDSIVVVVSFILDLVLLF). The Extracellular segment spans residues 153-159 (REHEFEA). A helical membrane pass occupies residues 160–180 (VGLLILLRLWRVARIINGIIL). Residues 181 to 235 (SVKTRSEQQVSKLKQVNLKLATKVEQLQHSCVEKEQEIERLTRMLKQHGLLSEQT) lie on the Cytoplasmic side of the membrane. The stretch at 187–228 (EQQVSKLKQVNLKLATKVEQLQHSCVEKEQEIERLTRMLKQH) forms a coiled coil.

Belongs to the hydrogen channel family. Homodimer.

The protein localises to the membrane. It is found in the cell membrane. Functionally, mediates the voltage-dependent proton permeability of excitable membranes. Forms a proton-selective channel through which protons may pass in accordance with their electrochemical gradient. The chain is Voltage-gated hydrogen channel 1 (HVCN1) from Gallus gallus (Chicken).